A 122-amino-acid polypeptide reads, in one-letter code: Large ribosomal subunit protein uL18 (122 aa).

It belongs to the universal ribosomal protein uL18 family. Part of the 50S ribosomal subunit; part of the 5S rRNA/L5/L18/L25 subcomplex. Contacts the 5S and 23S rRNAs.

Its function is as follows. This is one of the proteins that bind and probably mediate the attachment of the 5S RNA into the large ribosomal subunit, where it forms part of the central protuberance. The polypeptide is Large ribosomal subunit protein uL18 (Agathobacter rectalis (strain ATCC 33656 / DSM 3377 / JCM 17463 / KCTC 5835 / VPI 0990) (Eubacterium rectale)).